The sequence spans 84 residues: Cell division topological specificity factor (84 aa).

The protein belongs to the MinE family.

In terms of biological role, prevents the cell division inhibition by proteins MinC and MinD at internal division sites while permitting inhibition at polar sites. This ensures cell division at the proper site by restricting the formation of a division septum at the midpoint of the long axis of the cell. This chain is Cell division topological specificity factor, found in Desulfotalea psychrophila (strain LSv54 / DSM 12343).